We begin with the raw amino-acid sequence, 288 residues long: Bifunctional protein FolD (288 aa).

NADP(+) contacts are provided by residues 164–166 and V230; that span reads GRS.

Belongs to the tetrahydrofolate dehydrogenase/cyclohydrolase family. In terms of assembly, homodimer.

It carries out the reaction (6R)-5,10-methylene-5,6,7,8-tetrahydrofolate + NADP(+) = (6R)-5,10-methenyltetrahydrofolate + NADPH. The enzyme catalyses (6R)-5,10-methenyltetrahydrofolate + H2O = (6R)-10-formyltetrahydrofolate + H(+). It functions in the pathway one-carbon metabolism; tetrahydrofolate interconversion. In terms of biological role, catalyzes the oxidation of 5,10-methylenetetrahydrofolate to 5,10-methenyltetrahydrofolate and then the hydrolysis of 5,10-methenyltetrahydrofolate to 10-formyltetrahydrofolate. The protein is Bifunctional protein FolD of Thermomicrobium roseum (strain ATCC 27502 / DSM 5159 / P-2).